A 550-amino-acid chain; its full sequence is MADRNDPLLRTPAWRALETHLAEVRPLHLRELFARDPGRGDRLAAEGAGLYLDYSKQRVTEETVRLLVALAEARGLPGRRAAMFRGEKVNATEGRAALHVALRAPRGERIEVDGKDVVPEVHAVLDRMAAFAEQVRSGAWTGFTGRRIRTVVNVGIGGSDLGPAMAYRALRAYTTREIAFRFVSNVDGTDLAEAVRDLDPAETLFLVASKTFTTLETMTNAASARAWLLAALGDERAVARHFVAISTNEAEVRRFGIDPANMFGFWDWVGGRYSMDSAIGLSTMIAVGPGGFRELLAGFRAMDEHFRDAPLERNLPALVGLIGVWNASLLGAETVAVLPYDQYLDRFPAYLQQLTMESNGKRVTASGAPVEGHGTGAIYWGEPGTNGQHSFYQLLHQGTHLVACDFIGFCRTLNPLGRHHDLLMANLFAQGEALAFGKTAEEARAEGTPEALVPHRTFPGNRPSSTILADRLGPGTLGALVALYEHAVFTQGVIWDVDSFDQWGVELGKVLANRIVKELEAPADPALAHDGSTNALIRRYRARRGGSASS.

Glu-357 functions as the Proton donor in the catalytic mechanism. Active-site residues include His-389 and Lys-509.

It belongs to the GPI family.

The protein resides in the cytoplasm. It carries out the reaction alpha-D-glucose 6-phosphate = beta-D-fructose 6-phosphate. The protein operates within carbohydrate biosynthesis; gluconeogenesis. Its pathway is carbohydrate degradation; glycolysis; D-glyceraldehyde 3-phosphate and glycerone phosphate from D-glucose: step 2/4. In terms of biological role, catalyzes the reversible isomerization of glucose-6-phosphate to fructose-6-phosphate. In Anaeromyxobacter dehalogenans (strain 2CP-C), this protein is Glucose-6-phosphate isomerase.